The primary structure comprises 224 residues: UPF0758 protein VP0184 (224 aa).

One can recognise an MPN domain in the interval 102–224; that stretch reads ALTSPEQTKL…SVSFAERGWI (123 aa). Zn(2+) contacts are provided by histidine 173, histidine 175, and aspartate 186. Residues 173-186 carry the JAMM motif motif; the sequence is HNHPSGVAEPSQAD.

This sequence belongs to the UPF0758 family.

The polypeptide is UPF0758 protein VP0184 (Vibrio parahaemolyticus serotype O3:K6 (strain RIMD 2210633)).